Here is a 468-residue protein sequence, read N- to C-terminus: Meiotically up-regulated gene 111 protein (468 aa).

12 consecutive transmembrane segments (helical) span residues 13-33 (LVLI…NSVT), 59-79 (IVSA…VPFY), 92-112 (VFTT…SILY), 116-136 (FPTC…ISGT), 158-178 (IVVL…LGSI), 190-210 (LISW…AVFF), 285-305 (PIPI…FFDI), 330-350 (FGSL…GFSV), 356-376 (TMLI…FATA), 382-402 (LALF…LVAA), 417-437 (ALLE…AFIV), and 446-466 (FFIG…LLLG).

Its subcellular location is the membrane. Has a role in meiosis. In Schizosaccharomyces pombe (strain 972 / ATCC 24843) (Fission yeast), this protein is Meiotically up-regulated gene 111 protein (mug111).